Here is a 273-residue protein sequence, read N- to C-terminus: UPF0173 metal-dependent hydrolase Bpro_4324 (273 aa).

Belongs to the UPF0173 family.

The chain is UPF0173 metal-dependent hydrolase Bpro_4324 from Polaromonas sp. (strain JS666 / ATCC BAA-500).